We begin with the raw amino-acid sequence, 339 residues long: Dihydroorotase (339 aa).

Positions 12 and 14 each coordinate Zn(2+). Substrate-binding positions include 14 to 16 (HVR) and Asn-40. Residues Lys-94, His-133, His-167, and Asp-239 each contribute to the Zn(2+) site. Position 94 is an N6-carboxylysine (Lys-94). A substrate-binding site is contributed by His-133. Asp-239 is an active-site residue. Positions 243 and 255 each coordinate substrate.

It belongs to the metallo-dependent hydrolases superfamily. DHOase family. Class II DHOase subfamily. Homodimer. Zn(2+) serves as cofactor.

The enzyme catalyses (S)-dihydroorotate + H2O = N-carbamoyl-L-aspartate + H(+). Its pathway is pyrimidine metabolism; UMP biosynthesis via de novo pathway; (S)-dihydroorotate from bicarbonate: step 3/3. Its function is as follows. Catalyzes the reversible cyclization of carbamoyl aspartate to dihydroorotate. The chain is Dihydroorotase from Helicobacter pylori (strain G27).